The sequence spans 238 residues: Histone deacetylase 7 (238 aa).

2 disordered regions span residues 1-26 and 47-72; these read TPGSQPQPMDLRVGQRPTVEPPPEPA and QQQRSAEPMRLSMDPPLPELQGGQQE. The interaction with MEF2A stretch occupies residues 58–158; the sequence is SMDPPLPELQ…LPTEPPEHFP (101 aa). Serine 118 and serine 164 each carry phosphoserine. A disordered region spans residues 145-238; that stretch reads PVPSLPTEPP…NPALGSEADG (94 aa). Positions 176-190 are enriched in basic and acidic residues; it reads KSLERRKNPLLRKES. Serine 190 carries the post-translational modification Phosphoserine; by PKD/PRKD2. Over residues 206-221 the composition is skewed to low complexity; the sequence is SSPSSSSTPASGCSSP.

This sequence belongs to the histone deacetylase family. HD type 2 subfamily. Interacts with HDAC1, HDAC2, HDAC3, HDAC4, HDAC5, NCOR1, NCOR2, SIN3A, SIN3B, RBBP4, RBBP7, MTA1L1, SAP30 and MBD3. Interacts with KAT5 and EDNRA. Interacts with the 14-3-3 protein YWHAE, MEF2A, MEF2B and MEF2C. Interacts with ZMYND15. Interacts with KDM5B. Interacts with PML. Interacts with FOXP3. Interacts with RARA. May be phosphorylated by CaMK1. Phosphorylated by the PKC kinases PKN1 and PKN2, impairing nuclear import. Phosphorylation at Ser-164 by MARK2, MARK3 and PRKD1 promotes interaction with 14-3-3 proteins and export from the nucleus. Phosphorylation at Ser-164 is a prerequisite for phosphorylation at Ser-190.

It is found in the nucleus. The protein localises to the cytoplasm. The enzyme catalyses N(6)-acetyl-L-lysyl-[histone] + H2O = L-lysyl-[histone] + acetate. It carries out the reaction N(6)-acetyl-L-lysyl-[protein] + H2O = L-lysyl-[protein] + acetate. Responsible for the deacetylation of lysine residues on the N-terminal part of the core histones (H2A, H2B, H3 and H4). Histone deacetylation gives a tag for epigenetic repression and plays an important role in transcriptional regulation, cell cycle progression and developmental events. Histone deacetylases act via the formation of large multiprotein complexes. Involved in muscle maturation by repressing transcription of myocyte enhancer factors such as MEF2A, MEF2B and MEF2C. During muscle differentiation, it shuttles into the cytoplasm, allowing the expression of myocyte enhancer factors. May be involved in Epstein-Barr virus (EBV) latency, possibly by repressing the viral BZLF1 gene. Positively regulates the transcriptional repressor activity of FOXP3. Serves as a corepressor of RARA, causing its deacetylation and inhibition of RARE DNA element binding. In association with RARA, plays a role in the repression of microRNA-10a and thereby in the inflammatory response. Also acetylates non-histone proteins, such as ALKBH5. The chain is Histone deacetylase 7 (Hdac7) from Rattus norvegicus (Rat).